The following is a 1046-amino-acid chain: Piwi-like protein 2 (1046 aa).

The segment covering 1–12 (MDPKRPTFPSPP) has biased composition (pro residues). The tract at residues 1–35 (MDPKRPTFPSPPGVIRAPWQQSTEDQSQLLDQPSL) is disordered. A compositionally biased stretch (polar residues) spans 19 to 31 (WQQSTEDQSQLLD). Positions 462 to 575 (SVLDVMNLIY…LLPELSFMTG (114 aa)) constitute a PAZ domain. The region spanning 741–1032 (LVVCIMTGNR…LAFLSGQYLH (292 aa)) is the Piwi domain. Residues D818, E856, D888, and H1021 contribute to the active site.

Belongs to the argonaute family. Piwi subfamily. Component of the PET complex. Mg(2+) serves as cofactor. Post-translationally, methylated on arginine residues; required for the interaction with Tudor domain-containing protein and subsequent localization to the meiotic nuage, also named P granule. Detected in primordial germ cells (PGCs) from 3 dpf. In adult, it is found in both the female and male gonad. In the ovary, it is present in all stages of germ cell differentiation. In testis, it is present in mitotic and meiotic germ cells. No protein has been detected in the fully differentiated sperm cell.

The protein resides in the cytoplasm. Its subcellular location is the nucleus. Endoribonuclease that plays a central role during spermatogenesis by repressing transposable elements and preventing their mobilization, which is essential for the germline integrity. Plays an essential role in germ cell differentiation and meiosis, independently of the function in transposable elements repression. Acts via the piRNA metabolic process, which mediates the repression of transposable elements during meiosis by forming complexes composed of piRNAs and Piwi proteins and govern the methylation and subsequent repression of transposons. During piRNA biosynthesis, plays a key role in the piRNA amplification loop, also named ping-pong amplification cycle, by acting as a 'slicer-competent' piRNA endoribonuclease that cleaves primary piRNAs, which are then loaded onto 'slicer-incompetent' piwil4. Piwil2 slicing produces a pre-miRNA intermediate, which is then processed in mature piRNAs, and as well as a 16 nucleotide by-product that is degraded. Required for piwil4/miwi2 nuclear localization and association with secondary piRNAs antisense. Represses circadian rhythms by promoting the stability and activity of core clock components BMAL1 and CLOCK. The chain is Piwi-like protein 2 (piwil2) from Danio rerio (Zebrafish).